We begin with the raw amino-acid sequence, 886 residues long: Valine--tRNA ligase (886 aa).

Positions 43 to 53 (PYPTGRMHLGH) match the 'HIGH' region motif. The 'KMSKS' region motif lies at 528-532 (KMSKS). K531 serves as a coordination point for ATP.

This sequence belongs to the class-I aminoacyl-tRNA synthetase family. ValS type 2 subfamily.

The protein resides in the cytoplasm. The enzyme catalyses tRNA(Val) + L-valine + ATP = L-valyl-tRNA(Val) + AMP + diphosphate. Its function is as follows. Catalyzes the attachment of valine to tRNA(Val). As ValRS can inadvertently accommodate and process structurally similar amino acids such as threonine, to avoid such errors, it has a 'posttransfer' editing activity that hydrolyzes mischarged Thr-tRNA(Val) in a tRNA-dependent manner. This is Valine--tRNA ligase from Methanococcus maripaludis (strain DSM 14266 / JCM 13030 / NBRC 101832 / S2 / LL).